A 957-amino-acid polypeptide reads, in one-letter code: ADAMTS-like protein 2 (957 aa).

The first 29 residues, 1–29 (MDGRRQHPHWAWSLLAVAVVAGGAAPTEA), serve as a signal peptide directing secretion. In terms of domain architecture, TSP type-1 1 spans 47 to 106 (AYWWGEWTKWTACSRSCGGGVTSQERHCLQQRRKSVPGTGNRTCVGTSKRYQLCRVQECP). Cystine bridges form between Cys-59–Cys-100, Cys-63–Cys-105, and Cys-74–Cys-90. N-linked (GlcNAc...) asparagine glycans are attached at residues Asn-87, Asn-374, Asn-435, Asn-482, Asn-518, Asn-530, Asn-539, and Asn-550. Residues 532-544 (SSEAPFPNTSASP) show a composition bias toward polar residues. A disordered region spans residues 532-568 (SSEAPFPNTSASPPNLAGNRTHKARTRPKARKQGVSP). Residues 551 to 563 (RTHKARTRPKARK) show a composition bias toward basic residues. TSP type-1 domains lie at 570 to 624 (DMYR…EFCA), 628 to 692 (CQPR…PACG), 694 to 742 (QWEM…TGPP), 743 to 801 (CDRQ…KNCP), 803 to 857 (HWLA…TCFE), and 859 to 914 (PCFK…QPCP). A glycan (N-linked (GlcNAc...) asparagine) is linked at Asn-737. Asn-813 carries an N-linked (GlcNAc...) asparagine glycan. A PLAC domain is found at 918–956 (PDDSCQDQPGTNCALAIKVNLCGHWYYSKACCRSCRPPH).

In terms of assembly, interacts with LTBP1. Post-translationally, glycosylated. Can be O-fucosylated by POFUT2 on a serine or a threonine residue found within the consensus sequence C1-X(2)-(S/T)-C2-G of the TSP type-1 repeat domains where C1 and C2 are the first and second cysteine residue of the repeat, respectively. Fucosylated repeats can then be further glycosylated by the addition of a beta-1,3-glucose residue by the glucosyltransferase, B3GALTL. Fucosylation mediates the efficient secretion of ADAMTS family members. Can also be C-glycosylated with one or two mannose molecules on tryptophan residues within the consensus sequence W-X-X-W of the TPRs, and N-glycosylated. These other glycosylations can also facilitate secretion.

Its subcellular location is the secreted. The sequence is that of ADAMTS-like protein 2 (Adamtsl2) from Mus musculus (Mouse).